Here is a 164-residue protein sequence, read N- to C-terminus: E3 ubiquitin ligase complex SCF subunit sconC (164 aa).

Positions 106-164 are interaction with the F-box domain of F-box proteins; the sequence is ILAANYLDIKALLDVGCKTVANMIKGKSPEEIRKTFNIQNDFTPEEEDQIRRENEWAEE.

Belongs to the SKP1 family. Component of the SCF (SKP1-CUL1-F-box protein) E3 ubiquitin ligase complexes.

It functions in the pathway protein modification; protein ubiquitination. In terms of biological role, essential component of the SCF (SKP1-CUL1-F-box protein) E3 ubiquitin ligase complexes, which mediate the ubiquitination and subsequent proteasomal degradation of target proteins. Controls sulfur metabolite repression, probably by mediating the inactivation or degradation of the metR transcription factor. The polypeptide is E3 ubiquitin ligase complex SCF subunit sconC (sconC) (Arthroderma benhamiae (strain ATCC MYA-4681 / CBS 112371) (Trichophyton mentagrophytes)).